The chain runs to 322 residues: CRISPR-associated endonuclease Cas1 (322 aa).

The Mn(2+) site is built by Glu-149, His-214, and Glu-229.

Belongs to the CRISPR-associated endonuclease Cas1 family. As to quaternary structure, homodimer, forms a heterotetramer with a Cas2 homodimer. Mg(2+) is required as a cofactor. Mn(2+) serves as cofactor.

Functionally, CRISPR (clustered regularly interspaced short palindromic repeat), is an adaptive immune system that provides protection against mobile genetic elements (viruses, transposable elements and conjugative plasmids). CRISPR clusters contain spacers, sequences complementary to antecedent mobile elements, and target invading nucleic acids. CRISPR clusters are transcribed and processed into CRISPR RNA (crRNA). Acts as a dsDNA endonuclease. Involved in the integration of spacer DNA into the CRISPR cassette. This Methanocaldococcus jannaschii (strain ATCC 43067 / DSM 2661 / JAL-1 / JCM 10045 / NBRC 100440) (Methanococcus jannaschii) protein is CRISPR-associated endonuclease Cas1.